The chain runs to 201 residues: uncharacterized protein (201 aa).

Coiled coils occupy residues 3 to 43 and 76 to 120; these read YMDD…EVYK and TGQV…AKTK.

This is an uncharacterized protein from Archaeoglobus fulgidus (strain ATCC 49558 / DSM 4304 / JCM 9628 / NBRC 100126 / VC-16).